We begin with the raw amino-acid sequence, 272 residues long: Shikimate dehydrogenase (NADP(+)) (272 aa).

Shikimate is bound by residues 14–16 and T61; that span reads SKS. The active-site Proton acceptor is the K65. E77 is an NADP(+) binding site. N86 and D102 together coordinate shikimate. Residues 126–130, 149–154, and M212 contribute to the NADP(+) site; these read GAGGA and NRTADK. Y214 provides a ligand contact to shikimate. G237 lines the NADP(+) pocket.

The protein belongs to the shikimate dehydrogenase family. As to quaternary structure, homodimer.

The catalysed reaction is shikimate + NADP(+) = 3-dehydroshikimate + NADPH + H(+). The protein operates within metabolic intermediate biosynthesis; chorismate biosynthesis; chorismate from D-erythrose 4-phosphate and phosphoenolpyruvate: step 4/7. Functionally, involved in the biosynthesis of the chorismate, which leads to the biosynthesis of aromatic amino acids. Catalyzes the reversible NADPH linked reduction of 3-dehydroshikimate (DHSA) to yield shikimate (SA). This chain is Shikimate dehydrogenase (NADP(+)), found in Glaesserella parasuis serovar 5 (strain SH0165) (Haemophilus parasuis).